Here is a 37-residue protein sequence, read N- to C-terminus: Cytochrome b6-f complex subunit 5 (37 aa).

The chain crosses the membrane as a helical span at residues 5-25; sequence LLSGIVLGLITVSALGLFVAA.

Belongs to the PetG family. In terms of assembly, the 4 large subunits of the cytochrome b6-f complex are cytochrome b6, subunit IV (17 kDa polypeptide, PetD), cytochrome f and the Rieske protein, while the 4 small subunits are PetG, PetL, PetM and PetN. The complex functions as a dimer.

Its subcellular location is the plastid. The protein resides in the chloroplast thylakoid membrane. Component of the cytochrome b6-f complex, which mediates electron transfer between photosystem II (PSII) and photosystem I (PSI), cyclic electron flow around PSI, and state transitions. PetG is required for either the stability or assembly of the cytochrome b6-f complex. The sequence is that of Cytochrome b6-f complex subunit 5 from Phaeodactylum tricornutum (strain CCAP 1055/1).